The primary structure comprises 274 residues: Thiamine kinase (274 aa).

This sequence belongs to the thiamine kinase family.

The enzyme catalyses thiamine + ATP = thiamine phosphate + ADP + H(+). Its pathway is cofactor biosynthesis; thiamine diphosphate biosynthesis; thiamine phosphate from thiamine: step 1/1. Catalyzes the ATP-dependent phosphorylation of thiamine to thiamine phosphate. Is involved in thiamine salvage. The polypeptide is Thiamine kinase (Shigella boydii serotype 4 (strain Sb227)).